Here is a 195-residue protein sequence, read N- to C-terminus: ALK and LTK ligand 2b (195 aa).

Cystine bridges form between Cys-156-Cys-192 and Cys-170-Cys-179.

It belongs to the ALKAL family. Homodimer. In terms of tissue distribution, highly expressed in the swim bladder and single cells of unknown identity in the head.

It localises to the secreted. It is found in the cell membrane. Functionally, cytokine that acts as a physiological ligand for receptor tyrosine kinases LTK and ALK. Required for neural crest cell differentiation and iridophore development during embryonic iridophore development and adult stripe development by acting as a receptor for LTK. Also required for iridophore formation in the adult eye. This Danio rerio (Zebrafish) protein is ALK and LTK ligand 2b.